Reading from the N-terminus, the 96-residue chain is Protein Vpr (96 aa).

Residues Met1–Leu42 are homooligomerization. Phosphoserine; by host occurs at positions 79, 94, and 96.

It belongs to the HIV-1 VPR protein family. In terms of assembly, homooligomer, may form homodimer. Interacts with p6-gag region of the Pr55 Gag precursor protein through a (Leu-X-X)4 motif near the C-terminus of the P6gag protein. Interacts with host UNG. May interact with host RAD23A/HHR23A. Interacts with host VPRBP/DCAF1, leading to hijack the CUL4A-RBX1-DDB1-DCAF1/VPRBP complex, mediating ubiquitination of host proteins such as TERT and ZGPAT and arrest of the cell cycle in G2 phase. Post-translationally, phosphorylated on several residues by host. These phosphorylations regulate VPR activity for the nuclear import of the HIV-1 pre-integration complex.

The protein resides in the virion. It localises to the host nucleus. It is found in the host extracellular space. Its function is as follows. During virus replication, may deplete host UNG protein, and incude G2-M cell cycle arrest. Acts by targeting specific host proteins for degradation by the 26S proteasome, through association with the cellular CUL4A-DDB1 E3 ligase complex by direct interaction with host VPRPB/DCAF-1. Cell cycle arrest reportedly occurs within hours of infection and is not blocked by antiviral agents, suggesting that it is initiated by the VPR carried into the virion. Additionally, VPR induces apoptosis in a cell cycle dependent manner suggesting that these two effects are mechanistically linked. Detected in the serum and cerebrospinal fluid of AIDS patient, VPR may also induce cell death to bystander cells. In terms of biological role, during virus entry, plays a role in the transport of the viral pre-integration (PIC) complex to the host nucleus. This function is crucial for viral infection of non-dividing macrophages. May act directly at the nuclear pore complex, by binding nucleoporins phenylalanine-glycine (FG)-repeat regions. The protein is Protein Vpr of Homo sapiens (Human).